The sequence spans 122 residues: Large ribosomal subunit protein uL14c (122 aa).

Belongs to the universal ribosomal protein uL14 family. In terms of assembly, part of the 50S ribosomal subunit.

The protein localises to the plastid. It localises to the chloroplast. Binds to 23S rRNA. This Populus trichocarpa (Western balsam poplar) protein is Large ribosomal subunit protein uL14c.